A 406-amino-acid chain; its full sequence is Testis-specific Y-encoded-like protein 4 (406 aa).

Disordered regions lie at residues 1–63 (MNGV…EHCG), 81–121 (GLED…AKPK), 161–189 (EAGA…TRPR), and 387–406 (VRVP…FQSG). The segment covering 8 to 20 (NELSLANTTTPSH) has biased composition (polar residues). A compositionally biased stretch (low complexity) spans 93–102 (DAPSAPVAAD). A compositionally biased stretch (basic and acidic residues) spans 167 to 188 (QEKKGLQKEKKVAGGGKEETRP).

It belongs to the nucleosome assembly protein (NAP) family.

The chain is Testis-specific Y-encoded-like protein 4 (Tspyl4) from Mus musculus (Mouse).